The primary structure comprises 339 residues: Fructose-1,6-bisphosphatase class 1 (339 aa).

4 residues coordinate Mg(2+): Glu-92, Asp-114, Leu-116, and Asp-117. Residues 117-120 (DGSS), Asn-209, and Lys-275 contribute to the substrate site. Residue Glu-281 participates in Mg(2+) binding.

This sequence belongs to the FBPase class 1 family. In terms of assembly, homotetramer. Requires Mg(2+) as cofactor.

The protein localises to the cytoplasm. It carries out the reaction beta-D-fructose 1,6-bisphosphate + H2O = beta-D-fructose 6-phosphate + phosphate. Its pathway is carbohydrate biosynthesis; gluconeogenesis. This Acidithiobacillus ferrooxidans (strain ATCC 53993 / BNL-5-31) (Leptospirillum ferrooxidans (ATCC 53993)) protein is Fructose-1,6-bisphosphatase class 1.